Here is a 254-residue protein sequence, read N- to C-terminus: tRNA (guanine-N(7)-)-methyltransferase (254 aa).

Glu82, Glu107, Asp134, and Asp157 together coordinate S-adenosyl-L-methionine. Asp157 is an active-site residue. Substrate contacts are provided by residues Lys161, Asp193, and 233 to 236 (TKFE).

Belongs to the class I-like SAM-binding methyltransferase superfamily. TrmB family.

The catalysed reaction is guanosine(46) in tRNA + S-adenosyl-L-methionine = N(7)-methylguanosine(46) in tRNA + S-adenosyl-L-homocysteine. Its pathway is tRNA modification; N(7)-methylguanine-tRNA biosynthesis. Its function is as follows. Catalyzes the formation of N(7)-methylguanine at position 46 (m7G46) in tRNA. This Corynebacterium jeikeium (strain K411) protein is tRNA (guanine-N(7)-)-methyltransferase.